The primary structure comprises 553 residues: Solute carrier family 45 member 3 (553 aa).

A run of 11 helical transmembrane segments spans residues 19-39, 52-72, 88-108, 120-140, 161-181, 198-218, 275-295, 323-343, 353-373, 382-402, and 522-542; these read LLVN…ITYV, FMTM…PLLG, FIWA…RAGW, LELA…QVCF, YSVY…LPAI, CLFG…LLVA, FVAE…YTDF, MGSL…LVMD, AVYL…CLSH, AALT…LASL, and AYMV…TQVV.

This sequence belongs to the glycoside-pentoside-hexuronide (GPH) cation symporter transporter (TC 2.A.2) family. Prostate specific. Expressed in all prostatic glandular cells. Expressed both in normal and cancerous prostates.

The protein localises to the membrane. It catalyses the reaction sucrose(out) + H(+)(out) = sucrose(in) + H(+)(in). Its function is as follows. Proton-associated sucrose transporter. May be able to transport also glucose and fructose. The chain is Solute carrier family 45 member 3 from Homo sapiens (Human).